We begin with the raw amino-acid sequence, 233 residues long: Preflagellin peptidase (233 aa).

Methionine 1 is a topological domain (cytoplasmic). A helical membrane pass occupies residues 2–18 (IAYAIGLLGLLIASIQD). Residues 19–23 (IKSRE) are Extracellular-facing. A helical membrane pass occupies residues 24-46 (IENYIWIGMAVIGLLLSTYLSFT). The Cytoplasmic segment spans residues 47–49 (TGN). The helical transmembrane segment at 50 to 72 (FMPIISSISGFIICFIIGYLMFV) threads the bilayer. Residues 73-78 (LGIGGA) are Extracellular-facing. Residues 79-89 (DGKILMGMGAL) form a helical membrane-spanning segment. Residues 90–110 (IPSYAFPVYSSLQPLYTMEYI) lie on the Cytoplasmic side of the membrane. Residues 111 to 139 (PWFPLLVFFNGVILMIVLPIYLFFKNLSN) traverse the membrane as a helical segment. The Extracellular segment spans residues 140-207 (GVKPKKLKEY…QYVWATPELP (68 aa)). The chain crosses the membrane as a helical span at residues 208–219 (LLVPIALSYIIT). At 220 to 233 (PFLGDKILSIILPM) the chain is on the cytoplasmic side.

It belongs to the peptidase A24 family. Archaeal preflagellin peptidase subfamily.

It is found in the cell membrane. The enzyme catalyses Cleaves the signal peptide of 3 to 12 amino acids from the N-terminal of preflagellin, usually at Arg-Gly-|- or Lys-Gly-|-, to release flagellin.. Its function is as follows. Cleaves the N-terminal leader peptide from preflagellins. The processing of preflagellins is necessary for assembly of flagellins into a flagellum structure. The chain is Preflagellin peptidase (flaK) from Methanococcus voltae.